Here is a 560-residue protein sequence, read N- to C-terminus: Involucrin (560 aa).

The span at 1–15 shows a compositional bias: polar residues; that stretch reads MSQQHTLPVTLSPAL. 3 disordered regions span residues 1-131, 150-359, and 404-534; these read MSQQ…KLLD, EQLL…LVQQ, and GQLK…QSAL. Low complexity predominate over residues 76 to 91; it reads EQQQQEPQEQELQQQH. 2 stretches are compositionally biased toward basic and acidic residues: residues 92-115 and 159-172; these read WEQHEEYQKAENPEQQLKQEKAQR and QEGHLKHLEQREGQ. Positions 189–211 are enriched in low complexity; it reads QKGQLELPEQQEGQLELPEQQEG. Composition is skewed to basic and acidic residues over residues 212–231, 252–264, and 274–320; these read QLKHLEQQEGQLKHLEHQEG, QLKHLDQQEKQPE, and KHLE…EHQE. Positions 321 to 334 are enriched in low complexity; sequence GQLGLPEQQVQQLK. Basic and acidic residues-rich tracts occupy residues 335–353, 404–420, 454–463, 476–486, and 494–510; these read QLEKEEGQPKHLEEEEGQL, GQLKHLEEQEGQLKHLE, QLKHLEKQEA, KHLEQQEKQLE, and QLKHLEQQEGQLKDLEQ.

Belongs to the involucrin family. Directly or indirectly cross-linked to cornifelin (CNFN). Substrate of transglutaminase. Specific glutamines or lysines are cross-linked to keratins, desmoplakin and to inter involucrin molecules. As to expression, keratinocytes of epidermis and other stratified squamous epithelia.

The protein resides in the cytoplasm. In terms of biological role, part of the insoluble cornified cell envelope (CE) of stratified squamous epithelia. This chain is Involucrin (IVL), found in Pan paniscus (Pygmy chimpanzee).